Reading from the N-terminus, the 256-residue chain is 4-oxalocrotonate decarboxylase (256 aa).

Belongs to the hydratase/decarboxylase family. Forms a complex with AmnF. The cofactor is Mg(2+). Mn(2+) is required as a cofactor.

It catalyses the reaction (3E)-2-oxohex-3-enedioate + H(+) = 2-oxopent-4-enoate + CO2. Its activity is regulated as follows. Strongly inhibited by Fe(2+), Fe(3+), K(3)[Fe(CN)(6)], Ag(+) and Cu(2+). Functionally, involved in the modified meta-cleavage pathway for the 2-aminophenol catabolism. This Pseudomonas sp protein is 4-oxalocrotonate decarboxylase (amnE).